Reading from the N-terminus, the 209-residue chain is Large ribosomal subunit protein uL3 (209 aa).

An N5-methylglutamine modification is found at Q150.

The protein belongs to the universal ribosomal protein uL3 family. Part of the 50S ribosomal subunit. Forms a cluster with proteins L14 and L19. Post-translationally, methylated by PrmB.

Functionally, one of the primary rRNA binding proteins, it binds directly near the 3'-end of the 23S rRNA, where it nucleates assembly of the 50S subunit. The chain is Large ribosomal subunit protein uL3 from Buchnera aphidicola subsp. Schizaphis graminum (strain Sg).